Here is a 321-residue protein sequence, read N- to C-terminus: MSAAATMPMPREASNYDEISMQQSMLFSDSLKDLKNLRTQLYSAAEYFELSYTNDEQKQIVVETLKDYAIKALVNTVDHLGSVTYKVNDFVDEKVDEVAGTELRVSCIEQRLRMCQEYMDHEGRSQQSLVIDTPKFHKRYFLPSGEIKRGGNLAKLKNVEGSFDGEDDWNQFRNAVRATIRETPPPPVRKPILQSPSQRKPQRSATFSFSSIATAPKKEQDKRAVSPHRFPLLRSGSVAIRPSSISRPTTPSKSRAVTPTPKRYPSEPRRSASVRVAFEKEAQKEPEHQQQPSKSKRLLKALLSRRKTKKDDTLYTYLDEY.

Disordered regions lie at residues 179–273 (TIRE…RSAS) and 279–298 (EKEA…SKRL). Low complexity-rich tracts occupy residues 204 to 215 (SATFSFSSIATA) and 240 to 255 (IRPS…SKSR). Residues 279–288 (EKEAQKEPEH) are compositionally biased toward basic and acidic residues.

It belongs to the ABI family. As to quaternary structure, binds SCAR.

It localises to the cytoplasm. Its subcellular location is the cytoskeleton. Its function is as follows. Involved in regulation of actin and microtubule organization. Part of a WAVE complex that activates the Arp2/3 complex. The sequence is that of Protein ABIL3 (ABIL3) from Arabidopsis thaliana (Mouse-ear cress).